A 413-amino-acid chain; its full sequence is Multifunctional CCA protein (413 aa).

ATP contacts are provided by glycine 8 and arginine 11. 2 residues coordinate CTP: glycine 8 and arginine 11. Mg(2+) is bound by residues aspartate 21 and aspartate 23. Residues arginine 91, arginine 137, and arginine 140 each coordinate ATP. Arginine 91, arginine 137, and arginine 140 together coordinate CTP. The HD domain occupies 228–329 (TGKHTLLSLK…VSLFDKGDFW (102 aa)).

Belongs to the tRNA nucleotidyltransferase/poly(A) polymerase family. Bacterial CCA-adding enzyme type 1 subfamily. As to quaternary structure, monomer. Can also form homodimers and oligomers. Requires Mg(2+) as cofactor. Ni(2+) serves as cofactor.

It carries out the reaction a tRNA precursor + 2 CTP + ATP = a tRNA with a 3' CCA end + 3 diphosphate. The catalysed reaction is a tRNA with a 3' CCA end + 2 CTP + ATP = a tRNA with a 3' CCACCA end + 3 diphosphate. Catalyzes the addition and repair of the essential 3'-terminal CCA sequence in tRNAs without using a nucleic acid template. Adds these three nucleotides in the order of C, C, and A to the tRNA nucleotide-73, using CTP and ATP as substrates and producing inorganic pyrophosphate. tRNA 3'-terminal CCA addition is required both for tRNA processing and repair. Also involved in tRNA surveillance by mediating tandem CCA addition to generate a CCACCA at the 3' terminus of unstable tRNAs. While stable tRNAs receive only 3'-terminal CCA, unstable tRNAs are marked with CCACCA and rapidly degraded. The polypeptide is Multifunctional CCA protein (Shewanella denitrificans (strain OS217 / ATCC BAA-1090 / DSM 15013)).